A 524-amino-acid polypeptide reads, in one-letter code: Metal transporter Nramp2 (524 aa).

The disordered stretch occupies residues 34 to 58 (AYDSDDKVSIAVSDSDSEDGGGGGG). 12 helical membrane passes run 70-90 (LWRF…PGNL), 98-118 (AAAG…GALV), 155-175 (LALV…IKIL), 179-199 (TVPL…FLFL), 207-227 (LEAF…IMFG), 253-273 (AVGI…SALV), 295-315 (IESI…TTVF), 341-361 (YGTA…ASGQ), 389-409 (AMIT…FFDT), 420-440 (ALNV…ITLV), 457-477 (VISW…ILSF), and 486-506 (LVRS…VYLI).

Belongs to the NRAMP (TC 2.A.55) family.

The protein localises to the membrane. Its function is as follows. Probable metal transporter. The sequence is that of Metal transporter Nramp2 (NRAMP2) from Oryza sativa subsp. japonica (Rice).